Consider the following 121-residue polypeptide: Protransforming growth factor alpha (121 aa).

A signal peptide is located at residue leucine 1. The propeptide at 2–16 (ENSTSLLSDPPVAAA) is removed in mature form. Topologically, residues 2–75 (ENSTSLLSDP…AVVAASQKKQ (74 aa)) are extracellular. Asparagine 3 carries N-linked (GlcNAc...) asparagine glycosylation. An EGF-like domain is found at 20–60 (HFNDCPDSHTQFCFHGTCRFLVQEDRPACVCHSGYVGARCE). Intrachain disulfides connect cysteine 24-cysteine 37, cysteine 32-cysteine 48, and cysteine 50-cysteine 59. The propeptide at 67-121 (VVAASQKKQAITALVVVSIVALAVLIITCVLIHCCQVRKHCEWCRALICRHEKPS) is removed in mature form. Residues 76–101 (AITALVVVSIVALAVLIITCVLIHCC) form a helical membrane-spanning segment.

Interacts with the PDZ domains of MAGI3, SDCBP and SNTA1. The interaction with SDCBP, is required for the targeting to the cell surface. In the endoplasmic reticulum, in its immature form (i.e. with a prosegment and lacking full N-glycosylation), interacts with CNIH. In the Golgi apparatus, may form a complex with CNIH and GORASP2. Interacts (via cytoplasmic C-terminal domain) with NKD2. In terms of tissue distribution, hypothalamus.

The protein resides in the secreted. Its subcellular location is the extracellular space. It localises to the cell membrane. Functionally, TGF alpha is a mitogenic polypeptide that is able to bind to the EGF receptor/EGFR and to act synergistically with TGF beta to promote anchorage-independent cell proliferation in soft agar. This chain is Protransforming growth factor alpha (TGFA), found in Macaca mulatta (Rhesus macaque).